The following is an 83-amino-acid chain: ATP synthase subunit 9, mitochondrial (83 aa).

Transmembrane regions (helical) follow at residues 8–28 (IGAG…GNVL) and 45–72 (SFGY…LISS).

It belongs to the ATPase C chain family. As to quaternary structure, F-type ATPases have 2 components, CF(1) - the catalytic core - and CF(0) - the membrane proton channel. CF(1) has five subunits: alpha(3), beta(3), gamma(1), delta(1), epsilon(1). CF(0) has three main subunits: a, b and c.

The protein localises to the mitochondrion membrane. Its function is as follows. This protein is one of the chains of the nonenzymatic membrane component (F0) of mitochondrial ATPase. This Helianthus annuus (Common sunflower) protein is ATP synthase subunit 9, mitochondrial (ATP9).